The following is a 602-amino-acid chain: Beta-(1--&gt;2)glucan export ATP-binding/permease protein NdvA (602 aa).

The 291-residue stretch at 21–311 folds into the ABC transmembrane type-1 domain; the sequence is GWVLAGANLL…VVGFVNSVFM (291 aa). 6 helical membrane-spanning segments follow: residues 22–42, 68–88, 146–166, 167–187, 238–258, and 285–305; these read WVLA…PVLF, LLLA…AVAL, EHFA…YINW, RLAL…TLVV, LLAM…ITRA, and IVMF…VVGF. Positions 345-579 constitute an ABC transporter domain; sequence VEFDNVSFSY…RGYFAELAHA (235 aa). 378–385 contributes to the ATP binding site; that stretch reads GATGAGKS.

Belongs to the ABC transporter superfamily. Beta-(1--&gt;2)glucan exporter (TC 3.A.1.108.1) family. As to quaternary structure, homodimer.

It is found in the cell inner membrane. It catalyses the reaction [(1-&gt;2)-beta-D-glucosyl](n)(in) + ATP + H2O = [(1-&gt;2)-beta-D-glucosyl](n)(out) + ADP + phosphate + H(+). Functionally, involved in Beta-(1--&gt;2)glucan export. Transmembrane domains (TMD) form a pore in the inner membrane and the ATP-binding domain (NBD) is responsible for energy generation. This Rhodopseudomonas palustris (strain BisA53) protein is Beta-(1--&gt;2)glucan export ATP-binding/permease protein NdvA.